A 62-amino-acid chain; its full sequence is Beta-defensin 37 (62 aa).

Positions 1 to 16 (MKFSYFLLLLLSLSNF) are cleaved as a signal peptide. 3 cysteine pairs are disulfide-bonded: Cys29–Cys58, Cys36–Cys51, and Cys41–Cys59.

Belongs to the beta-defensin family. As to expression, only expressed in epididymis (corpus and cauda).

It is found in the secreted. Its function is as follows. Has antibacterial activity. The chain is Beta-defensin 37 (Defb37) from Mus musculus (Mouse).